A 184-amino-acid polypeptide reads, in one-letter code: Outer-membrane lipoprotein carrier protein (184 aa).

Positions 1-19 (MRAFLKILMVLIFMSVAYA) are cleaved as a signal peptide.

Belongs to the LolA family. As to quaternary structure, monomer.

The protein localises to the periplasm. Its function is as follows. Participates in the translocation of lipoproteins from the inner membrane to the outer membrane. Only forms a complex with a lipoprotein if the residue after the N-terminal Cys is not an aspartate (The Asp acts as a targeting signal to indicate that the lipoprotein should stay in the inner membrane). This Helicobacter pylori (strain HPAG1) protein is Outer-membrane lipoprotein carrier protein.